We begin with the raw amino-acid sequence, 225 residues long: Ribonuclease 3 (225 aa).

Residues 5 to 127 (IEKLTRQLGY…IIGAVYLDSD (123 aa)) form the RNase III domain. Glu40 lines the Mg(2+) pocket. Residue Asp44 is part of the active site. The Mg(2+) site is built by Asp113 and Glu116. Residue Glu116 is part of the active site. One can recognise a DRBM domain in the interval 154–224 (DPKTRLQEFL…AELALEQLTN (71 aa)).

The protein belongs to the ribonuclease III family. In terms of assembly, homodimer. The cofactor is Mg(2+).

The protein resides in the cytoplasm. The catalysed reaction is Endonucleolytic cleavage to 5'-phosphomonoester.. Its function is as follows. Digests double-stranded RNA. Involved in the processing of primary rRNA transcript to yield the immediate precursors to the large and small rRNAs (23S and 16S). Processes some mRNAs, and tRNAs when they are encoded in the rRNA operon. Processes pre-crRNA and tracrRNA of type II CRISPR loci if present in the organism. The protein is Ribonuclease 3 of Vibrio vulnificus (strain YJ016).